A 23-amino-acid chain; its full sequence is Unknown protein 1 (23 aa).

The polypeptide is Unknown protein 1 (Coniferiporia sulphurascens (Laminated root rot fungus)).